A 1158-amino-acid polypeptide reads, in one-letter code: ATP-dependent helicase/deoxyribonuclease subunit B (1158 aa).

In terms of domain architecture, UvrD-like helicase ATP-binding spans 1–275 (MTLHAYLGRA…QYFNQLYRFN (275 aa)). An ATP-binding site is contributed by 8–15 (GRAGTGKS). The UvrD-like helicase C-terminal domain maps to 269–583 (NQLYRFNNQD…SIGTMDLAKV (315 aa)). Residues C784, C1112, C1115, and C1121 each coordinate [4Fe-4S] cluster.

Belongs to the helicase family. AddB/RexB type 1 subfamily. As to quaternary structure, heterodimer of AddA and AddB. The cofactor is Mg(2+). [4Fe-4S] cluster serves as cofactor.

Its function is as follows. The heterodimer acts as both an ATP-dependent DNA helicase and an ATP-dependent, dual-direction single-stranded exonuclease. Recognizes the chi site generating a DNA molecule suitable for the initiation of homologous recombination. The AddB subunit has 5' -&gt; 3' nuclease activity but not helicase activity. The chain is ATP-dependent helicase/deoxyribonuclease subunit B from Staphylococcus aureus (strain USA300).